The primary structure comprises 60 residues: Transcriptional regulatory protein SenN (60 aa).

The segment at residues 11 to 31 (RFRKRKTFGNQILPLELLIEK) is a DNA-binding region (H-T-H motif).

It to B.subtilis SenS.

Functionally, regulates the expression of extracellular-protein genes of Bacillus natto. The chain is Transcriptional regulatory protein SenN (senN) from Bacillus subtilis subsp. natto.